The primary structure comprises 308 residues: GTPase Era (308 aa).

Residues 14–181 (RCGFVALIGA…RRALAAAMPE (168 aa)) enclose the Era-type G domain. The G1 stretch occupies residues 22-29 (GAPNVGKS). 22-29 (GAPNVGKS) contributes to the GTP binding site. The G2 stretch occupies residues 48–52 (QTTRA). A G3 region spans residues 69–72 (DTPG). GTP is bound by residues 69 to 73 (DTPGI) and 131 to 134 (NKID). Residues 131–134 (NKID) are G4. The segment at 160–162 (VAA) is G5. The KH type-2 domain maps to 212 to 289 (LHQELPYQST…HLFLFVKVRD (78 aa)).

Belongs to the TRAFAC class TrmE-Era-EngA-EngB-Septin-like GTPase superfamily. Era GTPase family. As to quaternary structure, monomer.

It is found in the cytoplasm. The protein resides in the cell inner membrane. In terms of biological role, an essential GTPase that binds both GDP and GTP, with rapid nucleotide exchange. Plays a role in 16S rRNA processing and 30S ribosomal subunit biogenesis and possibly also in cell cycle regulation and energy metabolism. This chain is GTPase Era, found in Afipia carboxidovorans (strain ATCC 49405 / DSM 1227 / KCTC 32145 / OM5) (Oligotropha carboxidovorans).